A 169-amino-acid polypeptide reads, in one-letter code: ATP synthase subunit b (169 aa).

A helical transmembrane segment spans residues 11-31 (IPSFIAQVVNFGLLLGLLYLF).

Belongs to the ATPase B chain family. F-type ATPases have 2 components, F(1) - the catalytic core - and F(0) - the membrane proton channel. F(1) has five subunits: alpha(3), beta(3), gamma(1), delta(1), epsilon(1). F(0) has three main subunits: a(1), b(2) and c(10-14). The alpha and beta chains form an alternating ring which encloses part of the gamma chain. F(1) is attached to F(0) by a central stalk formed by the gamma and epsilon chains, while a peripheral stalk is formed by the delta and b chains.

It localises to the cell membrane. F(1)F(0) ATP synthase produces ATP from ADP in the presence of a proton or sodium gradient. F-type ATPases consist of two structural domains, F(1) containing the extramembraneous catalytic core and F(0) containing the membrane proton channel, linked together by a central stalk and a peripheral stalk. During catalysis, ATP synthesis in the catalytic domain of F(1) is coupled via a rotary mechanism of the central stalk subunits to proton translocation. Functionally, component of the F(0) channel, it forms part of the peripheral stalk, linking F(1) to F(0). This Dehalococcoides mccartyi (strain ATCC BAA-2266 / KCTC 15142 / 195) (Dehalococcoides ethenogenes (strain 195)) protein is ATP synthase subunit b.